Reading from the N-terminus, the 104-residue chain is Large ribosomal subunit protein uL24 (104 aa).

It belongs to the universal ribosomal protein uL24 family. Part of the 50S ribosomal subunit.

One of two assembly initiator proteins, it binds directly to the 5'-end of the 23S rRNA, where it nucleates assembly of the 50S subunit. Its function is as follows. One of the proteins that surrounds the polypeptide exit tunnel on the outside of the subunit. The sequence is that of Large ribosomal subunit protein uL24 from Maricaulis maris (strain MCS10) (Caulobacter maris).